The primary structure comprises 503 residues: ATP synthase subunit alpha (503 aa).

170–177 (GDKQTGKT) contributes to the ATP binding site.

Belongs to the ATPase alpha/beta chains family. In terms of assembly, F-type ATPases have 2 components, CF(1) - the catalytic core - and CF(0) - the membrane proton channel. CF(1) has five subunits: alpha(3), beta(3), gamma(1), delta(1), epsilon(1). CF(0) has three main subunits: a(1), b(2) and c(9-12). The alpha and beta chains form an alternating ring which encloses part of the gamma chain. CF(1) is attached to CF(0) by a central stalk formed by the gamma and epsilon chains, while a peripheral stalk is formed by the delta and b chains.

It is found in the cell inner membrane. It catalyses the reaction ATP + H2O + 4 H(+)(in) = ADP + phosphate + 5 H(+)(out). In terms of biological role, produces ATP from ADP in the presence of a proton gradient across the membrane. The alpha chain is a regulatory subunit. The polypeptide is ATP synthase subunit alpha (Helicobacter pylori (strain Shi470)).